A 37-amino-acid chain; its full sequence is MKIRASVRKICEKCRLIRRRGRIIVICPNPRHKQRQG.

Belongs to the bacterial ribosomal protein bL36 family.

It localises to the plastid. The protein localises to the chloroplast. The sequence is that of Large ribosomal subunit protein bL36c from Vitis vinifera (Grape).